A 128-amino-acid chain; its full sequence is MSNIPAELKYVDSHEWLRLEADGSVTVGITAHAQELLGDIVFVELPKVGASLAKDEQAGVVESVKAASDVYCPIAGEVLAVNEELEGEPELANSDPYGDGWFFKIKPANAADLNGLMDAAAYAKEIGA.

Residues 24 to 106 (SVTVGITAHA…YGDGWFFKIK (83 aa)) form the Lipoyl-binding domain. Lys-65 is modified (N6-lipoyllysine).

It belongs to the GcvH family. In terms of assembly, the glycine cleavage system is composed of four proteins: P, T, L and H. The cofactor is (R)-lipoate.

The glycine cleavage system catalyzes the degradation of glycine. The H protein shuttles the methylamine group of glycine from the P protein to the T protein. The protein is Glycine cleavage system H protein of Chromobacterium violaceum (strain ATCC 12472 / DSM 30191 / JCM 1249 / CCUG 213 / NBRC 12614 / NCIMB 9131 / NCTC 9757 / MK).